An 87-amino-acid chain; its full sequence is Small ribosomal subunit protein bS20 (87 aa).

The protein belongs to the bacterial ribosomal protein bS20 family.

Its function is as follows. Binds directly to 16S ribosomal RNA. The polypeptide is Small ribosomal subunit protein bS20 (Clostridium beijerinckii (strain ATCC 51743 / NCIMB 8052) (Clostridium acetobutylicum)).